The following is a 517-amino-acid chain: ATP synthase subunit alpha (517 aa).

Residue glycine 174–threonine 181 coordinates ATP.

The protein belongs to the ATPase alpha/beta chains family. In terms of assembly, F-type ATPases have 2 components, CF(1) - the catalytic core - and CF(0) - the membrane proton channel. CF(1) has five subunits: alpha(3), beta(3), gamma(1), delta(1), epsilon(1). CF(0) has three main subunits: a(1), b(2) and c(9-12). The alpha and beta chains form an alternating ring which encloses part of the gamma chain. CF(1) is attached to CF(0) by a central stalk formed by the gamma and epsilon chains, while a peripheral stalk is formed by the delta and b chains.

The protein localises to the cell inner membrane. It catalyses the reaction ATP + H2O + 4 H(+)(in) = ADP + phosphate + 5 H(+)(out). Functionally, produces ATP from ADP in the presence of a proton gradient across the membrane. The alpha chain is a regulatory subunit. The chain is ATP synthase subunit alpha from Polaromonas sp. (strain JS666 / ATCC BAA-500).